The following is a 480-amino-acid chain: Acetylxylan esterase (480 aa).

The N-terminal stretch at 1 to 19 is a signal peptide; sequence MNRKLFMTGLLMLAMTMQA.

This sequence belongs to the AB hydrolase superfamily.

The catalysed reaction is Deacetylation of xylans and xylo-oligosaccharides.. Its pathway is glycan degradation; xylan degradation. In terms of biological role, involved in degradation of plant cell wall polysaccharides. Is an acetyl esterase with broad substrate specificity, releasing acetic acid from acetylated xylo-oligosaccharides and acetylated xylan as well as xylose-tetraacetate, 4-O-methylumbelliferyl acetate, glucose-pentaacetate, and cephalosporin C. Appears to have greater activity on oligosaccharides than on polymeric substrates. Is also able to release acetic acid from xylo-oligosaccharides with 4-O-methylglucuronic acid side groups proximally located to O-acetyl esters. Preferentially targets xylo-oligosaccharides possessing three or more O-acetyl groups, but following their depletion it is active on the less acetylated portion of the substrate. The polypeptide is Acetylxylan esterase (Xylanibacter ruminicola (strain ATCC 19189 / DSM 19721 / CIP 105475 / JCM 8958 / 23) (Prevotella ruminicola)).